Consider the following 476-residue polypeptide: Serine/threonine-protein kinase PknF (476 aa).

Phosphothreonine; by autocatalysis occurs at positions 8 and 13. A Protein kinase domain is found at 12 to 279; it reads FTIVRQLGSG…FARALGHRLG (268 aa). Residues 18–26 and Lys-41 contribute to the ATP site; that span reads LGSGGMGEV. Residue Asp-137 is the Proton acceptor of the active site. A phosphothreonine; by autocatalysis mark is found at Thr-173, Thr-175, and Thr-287. Ser-290 carries the post-translational modification Phosphoserine; by autocatalysis. A disordered region spans residues 332–376; the sequence is ADDERAAQPARTRTTTSAGTTTSVAPASTTRPAPTTPTTTGAADT. The segment covering 338 to 376 has biased composition (low complexity); that stretch reads AQPARTRTTTSAGTTTSVAPASTTRPAPTTPTTTGAADT.

This sequence belongs to the protein kinase superfamily. Ser/Thr protein kinase family. Dephosphorylated by PstP.

It carries out the reaction L-seryl-[protein] + ATP = O-phospho-L-seryl-[protein] + ADP + H(+). It catalyses the reaction L-threonyl-[protein] + ATP = O-phospho-L-threonyl-[protein] + ADP + H(+). This Mycobacterium bovis (strain ATCC BAA-935 / AF2122/97) protein is Serine/threonine-protein kinase PknF (pknF).